Here is a 341-residue protein sequence, read N- to C-terminus: MKKYKTGIINVTGYAGLELARILESHPSVELCSVTGRSLAGKKLSDVFPYLHRLDLPITENLEGQVDVAFLALPHKEGAALVPALLEKGMRVIDISADFRLKDPALYQAWYGFEHPCPGLLEEAVYGLPELKRKDIAGARLVANPGCYPTSAILGLVPAFKSDLIEPSAIIDAKSGLSGSGRTPTVKTIFCEADEDVCAYSIGTHRHQPEIVQELCRASRGVIPRVTFCPHLVPMSRGILSTAYARLKQPVTDEEVKEIYRQFYKDEPFVKVTAEPPHTRYTRGTNMCFIYPVVDALNEQLIVISCIDNLVKGAAGQAVQNMNIMLGLAETEGLEAMATLP.

Residue Cys-147 is part of the active site.

It belongs to the NAGSA dehydrogenase family. Type 1 subfamily.

It localises to the cytoplasm. The catalysed reaction is N-acetyl-L-glutamate 5-semialdehyde + phosphate + NADP(+) = N-acetyl-L-glutamyl 5-phosphate + NADPH + H(+). It functions in the pathway amino-acid biosynthesis; L-arginine biosynthesis; N(2)-acetyl-L-ornithine from L-glutamate: step 3/4. Its function is as follows. Catalyzes the NADPH-dependent reduction of N-acetyl-5-glutamyl phosphate to yield N-acetyl-L-glutamate 5-semialdehyde. The sequence is that of N-acetyl-gamma-glutamyl-phosphate reductase from Dehalococcoides mccartyi (strain CBDB1).